Consider the following 349-residue polypeptide: PDZ and LIM domain protein 2 (349 aa).

Residues 1 to 84 (MALTVNVVGP…PLRLQLDRSQ (84 aa)) enclose the PDZ domain. Disordered regions lie at residues 72–95 (SASPLRLQLDRSQTASPGQINGEG) and 108–147 (LRTHHNSQSSQRSACFSPASLSPRPDSPFSTPPPTSPIAL). Polar residues-rich tracts occupy residues 81–90 (DRSQTASPGQ) and 108–121 (LRTHHNSQSSQRSA). Residues serine 124, serine 127, serine 129, serine 134, and serine 137 each carry the phosphoserine modification. A phosphothreonine mark is found at threonine 138 and threonine 142. A phosphoserine mark is found at serine 143 and serine 163. Disordered regions lie at residues 168–212 (ATHH…SSLD) and 250–272 (ERGGTPAFVPSSLSPKASLPTSR). A compositionally biased stretch (polar residues) spans 176-192 (GQPTSQQAGHSSPSDST). Phosphoserine is present on residues serine 199, serine 204, serine 205, serine 209, serine 210, and serine 263. The segment covering 199–211 (SPGRPSSPRLSSL) has biased composition (low complexity). Residues 260 to 270 (SSLSPKASLPT) are compositionally biased toward polar residues. One can recognise an LIM zinc-binding domain in the interval 281-341 (HTCEKCSVNI…EKHARQRYSM (61 aa)).

Interacts with alpha-actinins ACTN1 and ACTN4, FLNA and MYH9. Interacts (via LIM zinc-binding domain) with MKRN2. Highly expressed in cornea and lung. Expressed at intermediate level in sclera and combined tissues of the eye irido-corneal angle. Specifically expressed in the corneal epithelial cells but not in other corneal layers.

The protein resides in the cytoplasm. It is found in the cytoskeleton. Functionally, probable adapter protein located at the actin cytoskeleton that promotes cell attachment. Necessary for the migratory capacity of epithelial cells. Overexpression enhances cell adhesion to collagen and fibronectin and suppresses anchorage independent growth. May contribute to tumor cell migratory capacity. This is PDZ and LIM domain protein 2 (Pdlim2) from Rattus norvegicus (Rat).